The chain runs to 49 residues: Large ribosomal subunit protein bL33 (49 aa).

This sequence belongs to the bacterial ribosomal protein bL33 family.

In Desulforudis audaxviator (strain MP104C), this protein is Large ribosomal subunit protein bL33.